The chain runs to 351 residues: GDSL esterase/lipase At3g53100 (351 aa).

An N-terminal signal peptide occupies residues 1–24 (MQKMRVSGFRVLLLVSCFFCKSKG). S36 (nucleophile) is an active-site residue. 3 N-linked (GlcNAc...) asparagine glycosylation sites follow: N234, N254, and N318. Catalysis depends on residues D326 and H329.

It belongs to the 'GDSL' lipolytic enzyme family.

Its subcellular location is the secreted. The sequence is that of GDSL esterase/lipase At3g53100 from Arabidopsis thaliana (Mouse-ear cress).